Consider the following 130-residue polypeptide: Fluoride-specific ion channel FluC (130 aa).

4 helical membrane-spanning segments follow: residues methionine 4–isoleucine 24, glycine 35–threonine 55, leucine 68–leucine 88, and alanine 99–leucine 119. Residues glycine 78 and threonine 81 each contribute to the Na(+) site.

Belongs to the fluoride channel Fluc/FEX (TC 1.A.43) family.

The protein localises to the cell membrane. The catalysed reaction is fluoride(in) = fluoride(out). With respect to regulation, na(+) is not transported, but it plays an essential structural role and its presence is essential for fluoride channel function. Fluoride-specific ion channel. Important for reducing fluoride concentration in the cell, thus reducing its toxicity. The chain is Fluoride-specific ion channel FluC from Ruminiclostridium cellulolyticum (strain ATCC 35319 / DSM 5812 / JCM 6584 / H10) (Clostridium cellulolyticum).